The following is a 203-amino-acid chain: Peptide deformylase (203 aa).

Positions 121 and 163 each coordinate Fe cation. Glu164 is a catalytic residue. His167 lines the Fe cation pocket.

The protein belongs to the polypeptide deformylase family. Fe(2+) is required as a cofactor.

The enzyme catalyses N-terminal N-formyl-L-methionyl-[peptide] + H2O = N-terminal L-methionyl-[peptide] + formate. Removes the formyl group from the N-terminal Met of newly synthesized proteins. Requires at least a dipeptide for an efficient rate of reaction. N-terminal L-methionine is a prerequisite for activity but the enzyme has broad specificity at other positions. The sequence is that of Peptide deformylase from Prochlorococcus marinus (strain MIT 9515).